The chain runs to 225 residues: Mitochondrial inner membrane protease ATP23 (225 aa).

H124 provides a ligand contact to a divalent metal cation. The active site involves E125. H128 is an a divalent metal cation binding site.

This sequence belongs to the peptidase M76 family.

The protein localises to the mitochondrion inner membrane. Its function is as follows. Has a dual role in the assembly of mitochondrial ATPase. Acts as a protease that removes N-terminal residues of mitochondrial ATPase CF(0) subunit 6 at the intermembrane space side. Also involved in the correct assembly of the membrane-embedded ATPase CF(0) particle, probably mediating association of subunit 6 with the subunit 9 ring. The sequence is that of Mitochondrial inner membrane protease ATP23 (ATP23) from Candida glabrata (strain ATCC 2001 / BCRC 20586 / JCM 3761 / NBRC 0622 / NRRL Y-65 / CBS 138) (Yeast).